A 155-amino-acid chain; its full sequence is RNA pyrophosphohydrolase (155 aa).

The Nudix hydrolase domain maps to 5–147 (KYRPNVAAII…KRQVYRQVIA (143 aa)). The Nudix box motif lies at 42 to 63 (GGIDEGETPLEALHRELLEEIG).

The protein belongs to the Nudix hydrolase family. RppH subfamily. A divalent metal cation is required as a cofactor.

Its function is as follows. Accelerates the degradation of transcripts by removing pyrophosphate from the 5'-end of triphosphorylated RNA, leading to a more labile monophosphorylated state that can stimulate subsequent ribonuclease cleavage. The sequence is that of RNA pyrophosphohydrolase from Helicobacter pylori (strain G27).